A 686-amino-acid chain; its full sequence is MTQSSTPAERHAWLTQKVAEHNRRYYEEDAPTIPDFEYDALVRELRELEARHPEFAAPTSPAQTVGGRPSTLFEKVRHPTPMTSLDNAFSDAELAHFDDKVARALNLPPGSRTFTYTCELKIDGLSINLYYVDGILQWAATRGDGEVGEKVTANIEGIPGIPTQLPGLQGELEVRGEVYMSKATFLAYNLKAEEEGRPLLKNPRNGAAGALRQKDPAETRRRGLEVILYALGKRDGVPVRTQWDILEWLRAQGFATSEYARRVTGSEAAAAYHAEMTAQRPQLPFDADGSVVKLDDLRLQEDAGYTSRAPKWAVAYKFPADVAQTVIEAITIQTGRTGKLTPVAELRPVLLEGTTVARATLHNEDFIRGLDLHVGDTVRVHKSGGIIPEVLGVVLEQRPEGSTPYAFPTHCPVCGHEAVRHEGAAGTFCTNPACPAKSTLRVRYFASRDVMDIKGLGERLVEQLVDAGLVRDPADLYALTAEQIEHLEMGETTTGGVRRVGRKNAEKLVAEIEASKTRELWRVFRSLGLPYVGEGTATRIARVYRSLEDIRQASVDDLARIPDVGRQVAEGIVQGLRDADMCAYLDRLTAAGVQPTPSVDVRVGEQLAGLTFVVTGTLSVPRDVIKLHLGQYGARVSGSVTKKTSYLIAGEDAGSKLEKATELKVPVLDEAGLQKLLAEKGAPPLP.

Residues 35-39 (DFEYD), 84-85 (SL), and Glu-119 each bind NAD(+). Lys-121 serves as the catalytic N6-AMP-lysine intermediate. NAD(+) contacts are provided by Arg-142, Glu-177, Lys-293, and Lys-317. 4 residues coordinate Zn(2+): Cys-411, Cys-414, Cys-429, and Cys-434. The region spanning 602–686 (RVGEQLAGLT…LAEKGAPPLP (85 aa)) is the BRCT domain.

It belongs to the NAD-dependent DNA ligase family. LigA subfamily. It depends on Mg(2+) as a cofactor. Mn(2+) is required as a cofactor.

The catalysed reaction is NAD(+) + (deoxyribonucleotide)n-3'-hydroxyl + 5'-phospho-(deoxyribonucleotide)m = (deoxyribonucleotide)n+m + AMP + beta-nicotinamide D-nucleotide.. Its function is as follows. DNA ligase that catalyzes the formation of phosphodiester linkages between 5'-phosphoryl and 3'-hydroxyl groups in double-stranded DNA using NAD as a coenzyme and as the energy source for the reaction. It is essential for DNA replication and repair of damaged DNA. The polypeptide is DNA ligase 1 (Deinococcus deserti (strain DSM 17065 / CIP 109153 / LMG 22923 / VCD115)).